The sequence spans 339 residues: Glyceraldehyde-3-phosphate dehydrogenase (339 aa).

NAD(+) is bound by residues 12–13 (RI), aspartate 39, arginine 84, and serine 127. D-glyceraldehyde 3-phosphate-binding positions include 157–159 (SCT), threonine 188, arginine 203, 216–217 (TG), and arginine 239. Catalysis depends on cysteine 158, which acts as the Nucleophile. Position 320 (asparagine 320) interacts with NAD(+).

Belongs to the glyceraldehyde-3-phosphate dehydrogenase family. Homotetramer.

The protein localises to the cytoplasm. It carries out the reaction D-glyceraldehyde 3-phosphate + phosphate + NAD(+) = (2R)-3-phospho-glyceroyl phosphate + NADH + H(+). It participates in carbohydrate degradation; glycolysis; pyruvate from D-glyceraldehyde 3-phosphate: step 1/5. Functionally, catalyzes the oxidative phosphorylation of glyceraldehyde 3-phosphate (G3P) to 1,3-bisphosphoglycerate (BPG) using the cofactor NAD. The first reaction step involves the formation of a hemiacetal intermediate between G3P and a cysteine residue, and this hemiacetal intermediate is then oxidized to a thioester, with concomitant reduction of NAD to NADH. The reduced NADH is then exchanged with the second NAD, and the thioester is attacked by a nucleophilic inorganic phosphate to produce BPG. The polypeptide is Glyceraldehyde-3-phosphate dehydrogenase (gapA) (Mycobacterium leprae (strain TN)).